We begin with the raw amino-acid sequence, 353 residues long: GDSL esterase/lipase At5g03810 (353 aa).

The N-terminal stretch at 1 to 24 (MKMFITMSMCLSVIACFYAGVGTG) is a signal peptide. The active-site Nucleophile is Ser-37. Residues Asn-100, Asn-255, Asn-256, Asn-260, and Asn-320 are each glycosylated (N-linked (GlcNAc...) asparagine). Active-site residues include Asp-328 and His-331.

It belongs to the 'GDSL' lipolytic enzyme family.

The protein localises to the secreted. The chain is GDSL esterase/lipase At5g03810 from Arabidopsis thaliana (Mouse-ear cress).